The primary structure comprises 236 residues: Lipoarabinomannan carrier protein LprG (236 aa).

Residues 1–25 (MQTRPRFAVQSLFAILATAAALVAG) form the signal peptide. Cys-26 is lipidated: N-palmitoyl cysteine. Cys-26 carries the S-diacylglycerol cysteine lipid modification.

The protein belongs to the LppX/LprAFG lipoprotein family. Interacts with itself, Ag85A (MSMEG_6398), LppI (MSMEG_3851) and LppK (MSMEG_3904) in vivo.

The protein localises to the cell inner membrane. It is found in the secreted. It localises to the cell wall. Helps membrane protein MSMEG_3069/MSMEI_2992 (P55) transport triacylglycerides (TAG) across the inner cell membrane into the periplasm and probably ultimately to the outer membrane. Binds TAG in its hydrophobic cavity and transfers it between lipid bilayers. TAG probably regulates lipid metabolism and growth regulation and plays a structural role in the outer membrane. Also binds mannosides, lipoarabinomannan and lipomannan and various glycolipids in the same cavity. Required for MSMEG_3069/MSMEI_2992 export activity. Export of ethidium bromide by MSMEG_3069/MSMEI_2992 can be complemented by the equivalent operon from M.tuberculosis (lprG-Rv1410c). Involved in mycolylation. This is Lipoarabinomannan carrier protein LprG from Mycolicibacterium smegmatis (strain ATCC 700084 / mc(2)155) (Mycobacterium smegmatis).